A 147-amino-acid polypeptide reads, in one-letter code: Large ribosomal subunit protein uL15 (147 aa).

Residues 1 to 13 (MKLENLKSKEGSR) are compositionally biased toward basic and acidic residues. The interval 1–54 (MKLENLKSKEGSRHKTKRVGRGFGSGIGKTSTRGSKGQKSRKSGHTRPGFEGGQ) is disordered. Over residues 36–45 (KGQKSRKSGH) the composition is skewed to basic residues.

This sequence belongs to the universal ribosomal protein uL15 family. In terms of assembly, part of the 50S ribosomal subunit.

Functionally, binds to the 23S rRNA. In Malacoplasma penetrans (strain HF-2) (Mycoplasma penetrans), this protein is Large ribosomal subunit protein uL15.